The chain runs to 131 residues: MSMTDPVADMLTRIRNGQRASKNEVSMPASKLKESIAKVLKDEGYIADYGVDAADGKPVLNIKLKYFQGKPVIETIKRVSRPGLRIYRSKDELPKVIGGLGVAIVSTSNGVMTDRAARALGQGGEVLCIVA.

The interval Met-1–Met-27 is disordered.

The protein belongs to the universal ribosomal protein uS8 family. Part of the 30S ribosomal subunit. Contacts proteins S5 and S12.

In terms of biological role, one of the primary rRNA binding proteins, it binds directly to 16S rRNA central domain where it helps coordinate assembly of the platform of the 30S subunit. The sequence is that of Small ribosomal subunit protein uS8 from Thioalkalivibrio sulfidiphilus (strain HL-EbGR7).